A 377-amino-acid polypeptide reads, in one-letter code: N-acetylgalactosamine-6-phosphate deacetylase (377 aa).

E125 contacts a divalent metal cation. Residue 136-137 (AH) participates in substrate binding. 2 residues coordinate a divalent metal cation: H191 and H212. Residues 215–216 (NG), R223, and 244–247 (DGHH) contribute to the substrate site. The active-site Proton donor/acceptor is the D269. 302-304 (LAG) lines the substrate pocket.

The protein belongs to the metallo-dependent hydrolases superfamily. NagA family. A divalent metal cation is required as a cofactor.

It catalyses the reaction N-acetyl-D-galactosamine 6-phosphate + H2O = D-galactosamine 6-phosphate + acetate. Its function is as follows. Catalyzes the deacetylation of N-acetyl-D-galactosamine 6-phosphate to D-galactosamine 6-phosphate. Can probably also catalyze the deacetylation of N-acetyl-D-glucosamine 6-phosphate to D-glucosamine 6-phosphate. This is N-acetylgalactosamine-6-phosphate deacetylase (agaA) from Escherichia coli O157:H7.